The sequence spans 354 residues: tRNA-specific 2-thiouridylase MnmA (354 aa).

ATP is bound by residues 6-13 (LLSGGVDS) and Leu-33. The active-site Nucleophile is Cys-100. Cys-100 and Cys-195 form a disulfide bridge. Gly-123 contacts ATP. The tract at residues 145–147 (KDQ) is interaction with tRNA. The active-site Cysteine persulfide intermediate is Cys-195.

The protein belongs to the MnmA/TRMU family.

It is found in the cytoplasm. It carries out the reaction S-sulfanyl-L-cysteinyl-[protein] + uridine(34) in tRNA + AH2 + ATP = 2-thiouridine(34) in tRNA + L-cysteinyl-[protein] + A + AMP + diphosphate + H(+). Its function is as follows. Catalyzes the 2-thiolation of uridine at the wobble position (U34) of tRNA, leading to the formation of s(2)U34. The polypeptide is tRNA-specific 2-thiouridylase MnmA (Borrelia turicatae (strain 91E135)).